Reading from the N-terminus, the 172-residue chain is Stellate protein CG33238 (172 aa).

It belongs to the casein kinase 2 subunit beta family. In terms of assembly, interacts in vitro with the casein kinase 2 alpha subunit (CkII-alpha). The relevance of such interaction is however unclear in vivo. Probably not expressed in wild-type flies. In males lacking the Y chromosome, it is testis-specific and constitutes the main component of star-shaped crystals.

In terms of biological role, unknown. In males lacking the Y chromosome, its strong overexpression leads to the appearance of proteinaceous star-shaped crystals in the primary spermatocytes causing meiotic drive, possibly by interfering with normal casein kinase 2 activity. In Drosophila melanogaster (Fruit fly), this protein is Stellate protein CG33238 (Ste:CG33238).